The primary structure comprises 310 residues: Putative S-adenosyl-L-methionine-dependent methyltransferase MMAR_0357 (310 aa).

S-adenosyl-L-methionine contacts are provided by residues aspartate 132 and 161-162 (DL).

It belongs to the UPF0677 family.

In terms of biological role, exhibits S-adenosyl-L-methionine-dependent methyltransferase activity. This chain is Putative S-adenosyl-L-methionine-dependent methyltransferase MMAR_0357, found in Mycobacterium marinum (strain ATCC BAA-535 / M).